Reading from the N-terminus, the 498-residue chain is ADP,ATP carrier protein 1 (498 aa).

Topologically, residues 1-33 (MSTSKSENYLSELRKIIWPIEQYENKKFLPLAF) are cytoplasmic. The chain crosses the membrane as a helical span at residues 34-54 (MMFCILLNYSTLRSIKDGFVV). Cysteines 37 and 85 form a disulfide. The Extracellular segment spans residues 55–67 (TDIGTESISFLKT). A helical membrane pass occupies residues 68–88 (YIVLPSAVIAMIIYVKLCDIL). Residues 89-92 (KQEN) lie on the Cytoplasmic side of the membrane. A helical transmembrane segment spans residues 93–113 (VFYVITSFFLGYFALFAFVLY). Topologically, residues 114–147 (PYPDLVHPDHKTIESLSLAYPNFKWFIKIVGKWS) are extracellular. A helical membrane pass occupies residues 148–168 (FASFYTIAELWGTMMLSLLFW). Over 169–184 (QFANQITKIAEAKRFY) the chain is Cytoplasmic. The chain crosses the membrane as a helical span at residues 185-205 (SMFGLLANLALPVTSVVIGYF). The Extracellular portion of the chain corresponds to 206-218 (LHEKTQIVAEHLK). The chain crosses the membrane as a helical span at residues 219 to 239 (FVPLFVIMITSSFLIILTYRW). At 240-279 (MNKNVLTDPRLYDPALVKEKKTKAKLSFIESLKMIFTSKY) the chain is on the cytoplasmic side. A helical membrane pass occupies residues 280–300 (VGYIALLIIAYGVSVNLVEGV). Residues 301-320 (WKSKVKELYPTKEAYTIYMG) lie on the Extracellular side of the membrane. A helical membrane pass occupies residues 321-341 (QFQFYQGWVAIAFMLIGSNIL). The Cytoplasmic segment spans residues 342–348 (RKVSWLT). Residues 349–369 (AAMITPLMMFITGAAFFSFIF) form a helical membrane-spanning segment. Residues 370-379 (FDSVIAMNLT) are Extracellular-facing. The helical transmembrane segment at 380–400 (GILASSPLTLAVMIGMIQNVL) threads the bilayer. The Cytoplasmic portion of the chain corresponds to 401–438 (SKGVKYSLFDATKNMAYIPLDKDLRVKGQAAVEVIGGR). 436-442 (GGRLGKS) lines the ATP pocket. The helical transmembrane segment at 439–459 (LGKSGGAIIQSTFFILFPVFG) threads the bilayer. Over 460–465 (FIEATP) the chain is Extracellular. Residues 466 to 486 (YFASIFFIIVILWIFAVKGLN) form a helical membrane-spanning segment. Topologically, residues 487-498 (KEYQVLVNKNEK) are cytoplasmic.

It belongs to the ADP/ATP translocase tlc family.

It localises to the cell membrane. Provides the rickettsial cell with host ATP in exchange for rickettsial ADP. This is an obligate exchange system. This energy acquiring activity is an important component of rickettsial parasitism. In Rickettsia prowazekii (strain Madrid E), this protein is ADP,ATP carrier protein 1 (tlcA).